The following is a 270-amino-acid chain: Formamidopyrimidine-DNA glycosylase (270 aa).

The Schiff-base intermediate with DNA role is filled by Pro2. Glu3 (proton donor) is an active-site residue. The Proton donor; for beta-elimination activity role is filled by Lys58. Residues His91, Arg110, and Lys151 each coordinate DNA. The segment at 236–270 (LVYGKAGAPCTECNTPLKEIRMNNRSTVYCPRCQR) adopts an FPG-type zinc-finger fold. Catalysis depends on Arg260, which acts as the Proton donor; for delta-elimination activity.

This sequence belongs to the FPG family. As to quaternary structure, monomer. Requires Zn(2+) as cofactor.

The enzyme catalyses Hydrolysis of DNA containing ring-opened 7-methylguanine residues, releasing 2,6-diamino-4-hydroxy-5-(N-methyl)formamidopyrimidine.. The catalysed reaction is 2'-deoxyribonucleotide-(2'-deoxyribose 5'-phosphate)-2'-deoxyribonucleotide-DNA = a 3'-end 2'-deoxyribonucleotide-(2,3-dehydro-2,3-deoxyribose 5'-phosphate)-DNA + a 5'-end 5'-phospho-2'-deoxyribonucleoside-DNA + H(+). Its function is as follows. Involved in base excision repair of DNA damaged by oxidation or by mutagenic agents. Acts as a DNA glycosylase that recognizes and removes damaged bases. Has a preference for oxidized purines, such as 7,8-dihydro-8-oxoguanine (8-oxoG). Has AP (apurinic/apyrimidinic) lyase activity and introduces nicks in the DNA strand. Cleaves the DNA backbone by beta-delta elimination to generate a single-strand break at the site of the removed base with both 3'- and 5'-phosphates. This is Formamidopyrimidine-DNA glycosylase from Marinobacter nauticus (strain ATCC 700491 / DSM 11845 / VT8) (Marinobacter aquaeolei).